An 81-amino-acid chain; its full sequence is Putative truncated GMC-type inactive oxidoreductase R833 (81 aa).

Belongs to the GMC oxidoreductase family.

The protein is Putative truncated GMC-type inactive oxidoreductase R833 of Acanthamoeba polyphaga mimivirus (APMV).